Reading from the N-terminus, the 696-residue chain is Polyribonucleotide nucleotidyltransferase (696 aa).

Mg(2+) is bound by residues D489 and D495. One can recognise a KH domain in the interval 556 to 615 (PQYVTMKINPEKIRDVIGKGGVVIREITEATNCAIDISDDGTIKIAAHTTEEGEAAKRRI). The S1 motif domain occupies 625–693 (GKVYEGTVVK…RQGRVRLSMK (69 aa)).

Belongs to the polyribonucleotide nucleotidyltransferase family. In terms of assembly, component of the RNA degradosome, which is a multiprotein complex involved in RNA processing and mRNA degradation. The cofactor is Mg(2+).

The protein localises to the cytoplasm. The catalysed reaction is RNA(n+1) + phosphate = RNA(n) + a ribonucleoside 5'-diphosphate. Its function is as follows. Involved in mRNA degradation. Catalyzes the phosphorolysis of single-stranded polyribonucleotides processively in the 3'- to 5'-direction. The protein is Polyribonucleotide nucleotidyltransferase of Coxiella burnetii (strain CbuK_Q154) (Coxiella burnetii (strain Q154)).